We begin with the raw amino-acid sequence, 293 residues long: ATP synthase gamma chain (293 aa).

This sequence belongs to the ATPase gamma chain family. F-type ATPases have 2 components, CF(1) - the catalytic core - and CF(0) - the membrane proton channel. CF(1) has five subunits: alpha(3), beta(3), gamma(1), delta(1), epsilon(1). CF(0) has three main subunits: a, b and c.

It is found in the cell inner membrane. Produces ATP from ADP in the presence of a proton gradient across the membrane. The gamma chain is believed to be important in regulating ATPase activity and the flow of protons through the CF(0) complex. In Leptothrix cholodnii (strain ATCC 51168 / LMG 8142 / SP-6) (Leptothrix discophora (strain SP-6)), this protein is ATP synthase gamma chain.